A 160-amino-acid polypeptide reads, in one-letter code: Cytosolic iron-sulfur assembly component 2A (160 aa).

Residues His-89, His-123, Glu-150, and Glu-153 each contribute to the Zn(2+) site.

It belongs to the MIP18 family. As to quaternary structure, monomer and homodimer. Component of the CIA complex. Interacts with CIAO1. Interacts with IREB2. Interacts with APAF1.

The protein localises to the cytoplasm. Its function is as follows. Component of the cytosolic iron-sulfur protein assembly (CIA) complex, a multiprotein complex that mediates the incorporation of iron-sulfur cluster into extramitochondrial Fe/S proteins. As a CIA complex component and in collaboration with CIAO1 specifically matures ACO1 and stabilizes IREB2, connecting cytosolic iron-sulfur protein maturation with cellular iron regulation. May play a role in chromosome segregation through establishment of sister chromatid cohesion. May induce apoptosis in collaboration with APAF1. The sequence is that of Cytosolic iron-sulfur assembly component 2A from Bos taurus (Bovine).